We begin with the raw amino-acid sequence, 432 residues long: uncharacterized protein (432 aa).

The 210-residue stretch at 223–432 (ASAVRGEALF…KDLIEYLKTR (210 aa)) folds into the Cytochrome c domain. Positions 236, 239, and 240 each coordinate heme c.

This is an uncharacterized protein from Sinorhizobium fredii (strain NBRC 101917 / NGR234).